The primary structure comprises 285 residues: Small ribosomal subunit protein uS2 (285 aa).

Positions 231–285 (GGKSGQAAAEPMAEWERELLEQHNAQQAEQAEAPAAEAPAEPAEAPAAEAAPQGE) are disordered. A compositionally biased stretch (low complexity) spans 255-285 (AQQAEQAEAPAAEAPAEPAEAPAAEAAPQGE).

It belongs to the universal ribosomal protein uS2 family.

This is Small ribosomal subunit protein uS2 from Micrococcus luteus (strain ATCC 4698 / DSM 20030 / JCM 1464 / CCM 169 / CCUG 5858 / IAM 1056 / NBRC 3333 / NCIMB 9278 / NCTC 2665 / VKM Ac-2230) (Micrococcus lysodeikticus).